The chain runs to 349 residues: Twinfilin-2-A (349 aa).

ADF-H domains follow at residues 4 to 139 (QTGI…KHVS) and 177 to 313 (GLSF…DEVH). A disordered region spans residues 321–349 (QAFAKPKGPAGKRGQKRLIKGPGENGEDS).

The protein belongs to the actin-binding proteins ADF family. Twinfilin subfamily. In terms of assembly, interacts with G-actin; ADP-actin form and capping protein (CP).

It localises to the cytoplasm. It is found in the cytoskeleton. The protein localises to the perinuclear region. Actin-binding protein involved in motile and morphological processes. Inhibits actin polymerization, likely by sequestering G-actin. The sequence is that of Twinfilin-2-A (twf2-a) from Xenopus laevis (African clawed frog).